The following is a 199-amino-acid chain: Peroxiredoxin-1 (199 aa).

One can recognise a Thioredoxin domain in the interval 6-165 (AYIGKLAPDF…TLRLVQAFQF (160 aa)). Cysteine 52 (cysteine sulfenic acid (-SOH) intermediate) is an active-site residue.

The protein belongs to the peroxiredoxin family. AhpC/Prx1 subfamily. In terms of assembly, homodimer; disulfide-linked, upon oxidation. 5 homodimers assemble to form a ring-like decamer. Interacts with GDPD5; forms a mixed-disulfide with GDPD5. Interacts with SESN1 and SESN2. Interacts with FAM107A. In terms of processing, the enzyme can be inactivated by further oxidation of the cysteine sulfenic acid (C(P)-SOH) to sulphinic acid (C(P)-SO2H) instead of its condensation to a disulfide bond. It can be reactivated by forming a transient disulfide bond with sulfiredoxin SRXN1, which reduces the cysteine sulfinic acid in an ATP- and Mg-dependent manner.

The protein resides in the cytoplasm. The catalysed reaction is a hydroperoxide + [thioredoxin]-dithiol = an alcohol + [thioredoxin]-disulfide + H2O. Its function is as follows. Thiol-specific peroxidase that catalyzes the reduction of hydrogen peroxide and organic hydroperoxides to water and alcohols, respectively. Plays a role in cell protection against oxidative stress by detoxifying peroxides and as sensor of hydrogen peroxide-mediated signaling events. Might participate in the signaling cascades of growth factors and tumor necrosis factor-alpha by regulating the intracellular concentrations of H(2)O(2). Reduces an intramolecular disulfide bond in GDPD5 that gates the ability to GDPD5 to drive postmitotic motor neuron differentiation. The sequence is that of Peroxiredoxin-1 (PRDX1) from Gekko japonicus (Schlegel's Japanese gecko).